Consider the following 447-residue polypeptide: MDPEAVELEKRHVHSVYENTAPYFTDLQSKAWPRVRQFLQDQKPGSLVADIGCGTGKYLKVNSQVHTLGCDYCGPLVEIARNRGCEVMVCDNLNLPFRDQGFDAIISIGVIHHFSTKERRIRAIKEMARVLAPGGQLMIYVWAMEQKNRRFEKQDVLVPWNRALCSRLLSESHQSWGHHCEHPRSRGFQGPGSVCGCAVCFKGRCDSKRSHSMDYGSAVARTCCEAISKEGERENGLYSNFGKSFRSWFFSRSLDESTLRKQIERVRPMKIPEAWANSTVSQQPSRHPSLDLHAPEPFSTKGPNLDEVFVDTSSQRHLGWLRTPGTSDNFSGHKGGGSRRKEGGNFLDITDTGDSVAASNSSDPSARKILRRVSAFDSNDSNSEDSSFLEAQRDATDSKAFMRYYHVFREGELSSLLQESVSELQVLSSGNDHGNWCIIAEKKRSWD.

A Phosphoserine modification is found at S212. Disordered stretches follow at residues A274–D306 and W320–D348. Residues A276–R286 are compositionally biased toward polar residues.

This sequence belongs to the methyltransferase superfamily.

May modify wobble uridines in specific arginine and glutamic acid tRNAs. Acts as a tumor suppressor by promoting the expression of LIN9. This is Probable tRNA methyltransferase 9B (Trmt9b) from Mus musculus (Mouse).